The following is a 250-amino-acid chain: 5-oxoprolinase subunit A (250 aa).

The protein belongs to the LamB/PxpA family. As to quaternary structure, forms a complex composed of PxpA, PxpB and PxpC.

The enzyme catalyses 5-oxo-L-proline + ATP + 2 H2O = L-glutamate + ADP + phosphate + H(+). Functionally, catalyzes the cleavage of 5-oxoproline to form L-glutamate coupled to the hydrolysis of ATP to ADP and inorganic phosphate. The chain is 5-oxoprolinase subunit A from Streptomyces griseus subsp. griseus (strain JCM 4626 / CBS 651.72 / NBRC 13350 / KCC S-0626 / ISP 5235).